The chain runs to 148 residues: Succinate dehydrogenase assembly factor 3, mitochondrial (148 aa).

Residues 1–12 (MYALRPTLRRSA) constitute a mitochondrion transit peptide. The interval 129 to 148 (RGTEGDLEDGDGGESGQKSQ) is disordered.

This sequence belongs to the complex I LYR family. SDHAF3 subfamily. Interacts with the iron-sulfur protein subunit within the SDH catalytic dimer.

It is found in the mitochondrion matrix. In terms of biological role, plays an essential role in the assembly of succinate dehydrogenase (SDH), an enzyme complex (also referred to as respiratory complex II) that is a component of both the tricarboxylic acid (TCA) cycle and the mitochondrial electron transport chain, and which couples the oxidation of succinate to fumarate with the reduction of ubiquinone (coenzyme Q) to ubiquinol. Promotes maturation of the iron-sulfur protein subunit of the SDH catalytic dimer, protecting it from the deleterious effects of oxidants. May act together with SDHAF1. The polypeptide is Succinate dehydrogenase assembly factor 3, mitochondrial (Neurospora crassa (strain ATCC 24698 / 74-OR23-1A / CBS 708.71 / DSM 1257 / FGSC 987)).